The sequence spans 221 residues: Very-long-chain (3R)-3-hydroxyacyl-CoA dehydratase PASTICCINO 2 (221 aa).

At Met1–Val11 the chain is on the cytoplasmic side. Residues Tyr12–Ile32 form a helical membrane-spanning segment. Over Thr33–Leu51 the chain is Lumenal. The chain crosses the membrane as a helical span at residues Gln52–Val70. Topologically, residues Arg71–Ala76 are cytoplasmic. A helical transmembrane segment spans residues Thr77–Phe95. Over Pro96–Ser100 the chain is Lumenal. Residues His101–Phe122 traverse the membrane as a helical segment. Residues Gly123–Ser142 lie on the Cytoplasmic side of the membrane. The chain crosses the membrane as a helical span at residues Phe143–Ile165. Residues Tyr147 and Glu154 contribute to the active site. The Lumenal portion of the chain corresponds to Lys166 to Asp184. Residues Phe185–Tyr204 form a helical membrane-spanning segment. Residues Arg205–Glu221 lie on the Cytoplasmic side of the membrane.

The protein belongs to the very long-chain fatty acids dehydratase HACD family. In terms of assembly, interacts with CDKA-1; but only with the 'Tyr-15' phosphorylated protein. Interacts with PAS1. Part of the fatty acid elongase complex which contains a beta-ketoacyl-CoA synthase (KCS), a beta-ketoacyl-CoA reductase (KCR), a beta-hydroxyacyl-CoA dehydratase (HCD) and an enoyl-CoA reductase (ECR). In terms of tissue distribution, high expression in young seedlings, roots, root tips, flowers and young siliques. Lower levels in leaves and stems.

The protein resides in the endoplasmic reticulum membrane. The protein localises to the cytoplasm. It is found in the nucleus. The catalysed reaction is a very-long-chain (3R)-3-hydroxyacyl-CoA = a very-long-chain (2E)-enoyl-CoA + H2O. It participates in lipid metabolism; fatty acid biosynthesis. Its function is as follows. Catalyzes the third of the four reactions of the long-chain fatty acids elongation cycle. This endoplasmic reticulum-bound enzymatic process, allows the addition of two carbons to the chain of long- and very long-chain fatty acids/VLCFAs per cycle. This enzyme catalyzes the dehydration of the 3-hydroxyacyl-CoA intermediate into trans-2,3-enoyl-CoA, within each cycle of fatty acid elongation. Thereby, it participates in the production of VLCFAs of different chain lengths that are involved in multiple biological processes as precursors of membrane lipids and lipid mediators. May be an anti-phosphatase that prevents CDKA-1 dephosphorylation and activation. Involved in the hormonal control of cell division and differentiation. Required for proliferation control of meristematic and non-meristematic cells. Negative regulator of the cell cycle. The polypeptide is Very-long-chain (3R)-3-hydroxyacyl-CoA dehydratase PASTICCINO 2 (PAS2) (Arabidopsis thaliana (Mouse-ear cress)).